Reading from the N-terminus, the 418-residue chain is 3-phosphoshikimate 1-carboxyvinyltransferase (418 aa).

3 residues coordinate 3-phosphoshikimate: Lys-26, Ser-27, and Arg-31. Lys-26 provides a ligand contact to phosphoenolpyruvate. Residues Gly-97 and Arg-125 each coordinate phosphoenolpyruvate. 3-phosphoshikimate-binding residues include Ser-170, Ser-171, Gln-172, Asp-297, Asn-320, and Lys-324. Gln-172 provides a ligand contact to phosphoenolpyruvate. Asp-297 (proton acceptor) is an active-site residue. Positions 328, 375, and 400 each coordinate phosphoenolpyruvate.

This sequence belongs to the EPSP synthase family. In terms of assembly, monomer.

The protein localises to the cytoplasm. It catalyses the reaction 3-phosphoshikimate + phosphoenolpyruvate = 5-O-(1-carboxyvinyl)-3-phosphoshikimate + phosphate. Its pathway is metabolic intermediate biosynthesis; chorismate biosynthesis; chorismate from D-erythrose 4-phosphate and phosphoenolpyruvate: step 6/7. Functionally, catalyzes the transfer of the enolpyruvyl moiety of phosphoenolpyruvate (PEP) to the 5-hydroxyl of shikimate-3-phosphate (S3P) to produce enolpyruvyl shikimate-3-phosphate and inorganic phosphate. In Pseudomonas syringae pv. syringae (strain B728a), this protein is 3-phosphoshikimate 1-carboxyvinyltransferase.